Here is a 332-residue protein sequence, read N- to C-terminus: Galactosylgalactosylxylosylprotein 3-beta-glucuronosyltransferase 1 (332 aa).

At 1–6 the chain is on the cytoplasmic side; sequence MPKRRD. Residues 3 to 5 are essential for transport from endoplasmic reticulum to Golgi apparatus and interaction with SAR1A; the sequence is KRR. The chain crosses the membrane as a helical; Signal-anchor for type II membrane protein span at residues 7–27; sequence ILAIVLIVLPWTLLITVWHQS. The Lumenal portion of the chain corresponds to 28-332; sequence TLAPLLAVHK…KGFTDPSVEI (305 aa). Position 91–93 (91–93) interacts with UDP-alpha-D-glucuronate; that stretch reads PTY. Phosphothreonine is present on residues threonine 103 and threonine 108. Aspartate 122 serves as a coordination point for UDP-alpha-D-glucuronate. Asparagine 140 carries N-linked (GlcNAc...) asparagine glycosylation. 2 residues coordinate UDP-alpha-D-glucuronate: arginine 165 and arginine 170. Asparagine 184 carries N-linked (GlcNAc...) asparagine glycosylation. A UDP-alpha-D-glucuronate-binding site is contributed by 195–197; it reads DDD. Aspartate 197 contacts Mn(2+). The interval 243-252 is interaction with galactose moiety of substrate glycoprotein; it reads FDPHRPFAID. Glutamate 282 acts as the Proton donor/acceptor in catalysis. Asparagine 301 is a glycosylation site (N-linked (GlcNAc...) asparagine). A UDP-alpha-D-glucuronate-binding site is contributed by 309–311; that stretch reads HTR.

The protein belongs to the glycosyltransferase 43 family. As to quaternary structure, homodimer. Interacts with SAR1A. Mn(2+) is required as a cofactor. In terms of processing, the soluble form derives from the membrane form by proteolytic processing.

The protein localises to the golgi apparatus membrane. It is found in the secreted. It catalyses the reaction 3-O-(beta-D-galactosyl-(1-&gt;3)-beta-D-galactosyl-(1-&gt;4)-beta-D-xylosyl)-L-seryl-[protein] + UDP-alpha-D-glucuronate = 3-O-(beta-D-GlcA-(1-&gt;3)-beta-D-Gal-(1-&gt;3)-beta-D-Gal-(1-&gt;4)-beta-D-Xyl)-L-seryl-[protein] + UDP + H(+). It participates in protein modification; protein glycosylation. Involved in the biosynthesis of L2/HNK-1 carbohydrate epitope on glycoproteins. Can also play a role in glycosaminoglycan biosynthesis. Substrates include asialo-orosomucoid (ASOR), asialo-fetuin, and asialo-neural cell adhesion molecule. Requires sphingomyelin for activity: stearoyl-sphingomyelin was the most effective, followed by palmitoyl-sphingomyelin and lignoceroyl-sphingomyelin. Activity was demonstrated only for sphingomyelin with a saturated fatty acid and not for that with an unsaturated fatty acid, regardless of the length of the acyl group. The chain is Galactosylgalactosylxylosylprotein 3-beta-glucuronosyltransferase 1 from Pan troglodytes (Chimpanzee).